The following is a 395-amino-acid chain: Flap endonuclease 1 (395 aa).

The tract at residues 1-108 (MGILGLSKLL…DELETRRQKA (108 aa)) is N-domain. Aspartate 34 is a binding site for Mg(2+). Arginine 74 lines the DNA pocket. Positions 90, 162, 164, 183, and 185 each coordinate Mg(2+). Residues 126-257 (MMEKMSKRTV…QRAWEGIQRY (132 aa)) form an I-domain region. Residue glutamate 162 coordinates DNA. DNA contacts are provided by glycine 235 and aspartate 237. Aspartate 237 serves as a coordination point for Mg(2+). Residues 340–348 (TQGRLDNFF) form an interaction with PCNA region.

The protein belongs to the XPG/RAD2 endonuclease family. FEN1 subfamily. In terms of assembly, interacts with PCNA. Three molecules of FEN1 bind to one PCNA trimer with each molecule binding to one PCNA monomer. PCNA stimulates the nuclease activity without altering cleavage specificity. Mg(2+) is required as a cofactor. Phosphorylated. Phosphorylation upon DNA damage induces relocalization to the nuclear plasma.

It localises to the nucleus. It is found in the nucleolus. Its subcellular location is the nucleoplasm. The protein localises to the mitochondrion. Its function is as follows. Structure-specific nuclease with 5'-flap endonuclease and 5'-3' exonuclease activities involved in DNA replication and repair. During DNA replication, cleaves the 5'-overhanging flap structure that is generated by displacement synthesis when DNA polymerase encounters the 5'-end of a downstream Okazaki fragment. It enters the flap from the 5'-end and then tracks to cleave the flap base, leaving a nick for ligation. Also involved in the long patch base excision repair (LP-BER) pathway, by cleaving within the apurinic/apyrimidinic (AP) site-terminated flap. Acts as a genome stabilization factor that prevents flaps from equilibrating into structures that lead to duplications and deletions. Also possesses 5'-3' exonuclease activity on nicked or gapped double-stranded DNA, and exhibits RNase H activity. Also involved in replication and repair of rDNA and in repairing mitochondrial DNA. The polypeptide is Flap endonuclease 1 (Leishmania braziliensis).